The following is a 134-amino-acid chain: Small ribosomal subunit protein bS6 (134 aa).

The segment at 99 to 134 (PSQLAKSADEKRARKAPRSENFDNDQDDESNDDSDE) is disordered. Basic and acidic residues predominate over residues 105-119 (SADEKRARKAPRSEN). Acidic residues predominate over residues 120–134 (FDNDQDDESNDDSDE).

This sequence belongs to the bacterial ribosomal protein bS6 family.

Binds together with bS18 to 16S ribosomal RNA. The chain is Small ribosomal subunit protein bS6 from Psychrobacter sp. (strain PRwf-1).